The chain runs to 208 residues: MFDIGVGELTLIAVVALVVLGPERLPKAARFAGLWVRRARMQWDSVKQELERELEAEELKRSLQDVQASLREAEDQLRNTQQQVEQGARTLHDDVSRDIDIRASATPVATPLELAHADLSASPDVDATAGVTDAAGAAHTAPVIAQAQPIAPAPHQTLVPAPHDTIVPAPHAAHLASAPEPVAVAPVDAGTPAAWTPSAPAKLQEKQP.

Residues methionine 1–glycine 21 traverse the membrane as a helical segment. Residues alanine 178–alanine 189 show a composition bias toward low complexity. A disordered region spans residues alanine 178–proline 208.

It belongs to the TatB family. In terms of assembly, the Tat system comprises two distinct complexes: a TatABC complex, containing multiple copies of TatA, TatB and TatC subunits, and a separate TatA complex, containing only TatA subunits. Substrates initially bind to the TatABC complex, which probably triggers association of the separate TatA complex to form the active translocon.

The protein localises to the cell inner membrane. Functionally, part of the twin-arginine translocation (Tat) system that transports large folded proteins containing a characteristic twin-arginine motif in their signal peptide across membranes. Together with TatC, TatB is part of a receptor directly interacting with Tat signal peptides. TatB may form an oligomeric binding site that transiently accommodates folded Tat precursor proteins before their translocation. The sequence is that of Sec-independent protein translocase protein TatB from Xanthomonas euvesicatoria pv. vesicatoria (strain 85-10) (Xanthomonas campestris pv. vesicatoria).